A 150-amino-acid chain; its full sequence is uncharacterized protein (150 aa).

Residues 5–66 (LDKVDRRLLE…KPNYKKLNLG (62 aa)) form the HTH asnC-type domain. A DNA-binding region (H-T-H motif) is located at residues 24 to 43 (IATLSKKLGIPRTTVHYRIK).

This is an uncharacterized protein from Pyrococcus horikoshii (strain ATCC 700860 / DSM 12428 / JCM 9974 / NBRC 100139 / OT-3).